The following is a 314-amino-acid chain: Adenosine receptor A3 (314 aa).

The Extracellular segment spans residues 1 to 14; sequence MAVNGTALLLANVT. Asn-4 and Asn-12 each carry an N-linked (GlcNAc...) asparagine glycan. Residues 15–37 traverse the membrane as a helical segment; sequence YITVEILIGLCAIVGNVLVIWVV. Topologically, residues 38–48 are cytoplasmic; that stretch reads KLNPSLQTTTF. The helical transmembrane segment at 49-72 threads the bilayer; it reads YFIVSLALADIAVGVLVMPLAIVI. Residues 73–84 are Extracellular-facing; the sequence is SLGITIQFYNCL. A disulfide bond links Cys-83 and Cys-166. Residues 85-106 form a helical membrane-spanning segment; it reads FMTCLLLIFTHASIMSLLAIAV. Topologically, residues 107-126 are cytoplasmic; it reads DRYLRVKLTVRYRRVTTQRR. Residues 127 to 148 traverse the membrane as a helical segment; that stretch reads IWLALGLCWLVSFLVGLTPMFG. Over 149-177 the chain is Extracellular; the sequence is WNMKLTSEHQRNVTFLSCQFSSVMRMDYM. The N-linked (GlcNAc...) asparagine glycan is linked to Asn-160. Residues 178-198 form a helical membrane-spanning segment; it reads VYFSFFTWILIPLVVMCAIYL. At 199-231 the chain is on the cytoplasmic side; that stretch reads DIFYVIRNKLNQNFSSSKETGAFYGREFKTAKS. Residues 232–255 traverse the membrane as a helical segment; the sequence is LFLVLFLFAFSWLPLSIINCITYF. Residues 256 to 261 are Extracellular-facing; sequence HGEVPQ. The chain crosses the membrane as a helical span at residues 262 to 284; the sequence is IILYLGILLSHANSMMNPIVYAY. Residues 285 to 314 lie on the Cytoplasmic side of the membrane; it reads KIKKFKETYLLIFKTYMICQSSDSLDSSTE. Cys-303 is lipidated: S-palmitoyl cysteine.

This sequence belongs to the G-protein coupled receptor 1 family.

It localises to the cell membrane. Functionally, receptor for adenosine. The activity of this receptor is mediated by G proteins which inhibits adenylyl cyclase. This chain is Adenosine receptor A3 (ADORA3), found in Canis lupus familiaris (Dog).